The primary structure comprises 320 residues: Beta-ketoacyl-[acyl-carrier-protein] synthase III (320 aa).

Residues cysteine 114 and histidine 247 contribute to the active site. The segment at 248-252 (QANRR) is ACP-binding. The active site involves asparagine 277.

The protein belongs to the thiolase-like superfamily. FabH family. In terms of assembly, homodimer.

It localises to the cytoplasm. It catalyses the reaction malonyl-[ACP] + acetyl-CoA + H(+) = 3-oxobutanoyl-[ACP] + CO2 + CoA. It participates in lipid metabolism; fatty acid biosynthesis. In terms of biological role, catalyzes the condensation reaction of fatty acid synthesis by the addition to an acyl acceptor of two carbons from malonyl-ACP. Catalyzes the first condensation reaction which initiates fatty acid synthesis and may therefore play a role in governing the total rate of fatty acid production. Possesses both acetoacetyl-ACP synthase and acetyl transacylase activities. Its substrate specificity determines the biosynthesis of branched-chain and/or straight-chain of fatty acids. This chain is Beta-ketoacyl-[acyl-carrier-protein] synthase III, found in Neisseria meningitidis serogroup B (strain ATCC BAA-335 / MC58).